We begin with the raw amino-acid sequence, 506 residues long: Probable cytosol aminopeptidase (506 aa).

Mn(2+) is bound by residues lysine 270 and aspartate 275. Residue lysine 282 is part of the active site. The Mn(2+) site is built by aspartate 293, aspartate 352, and glutamate 354. Arginine 356 is a catalytic residue.

The protein belongs to the peptidase M17 family. Mn(2+) serves as cofactor.

The protein resides in the cytoplasm. It carries out the reaction Release of an N-terminal amino acid, Xaa-|-Yaa-, in which Xaa is preferably Leu, but may be other amino acids including Pro although not Arg or Lys, and Yaa may be Pro. Amino acid amides and methyl esters are also readily hydrolyzed, but rates on arylamides are exceedingly low.. The catalysed reaction is Release of an N-terminal amino acid, preferentially leucine, but not glutamic or aspartic acids.. In terms of biological role, presumably involved in the processing and regular turnover of intracellular proteins. Catalyzes the removal of unsubstituted N-terminal amino acids from various peptides. The polypeptide is Probable cytosol aminopeptidase (Photorhabdus laumondii subsp. laumondii (strain DSM 15139 / CIP 105565 / TT01) (Photorhabdus luminescens subsp. laumondii)).